The sequence spans 78 residues: Small ribosomal subunit protein bS20 (78 aa).

The segment at 55 to 78 (KSKGLIHKNKASRDKARLASKLAK) is disordered.

Belongs to the bacterial ribosomal protein bS20 family.

Binds directly to 16S ribosomal RNA. The polypeptide is Small ribosomal subunit protein bS20 (Streptococcus mutans serotype c (strain ATCC 700610 / UA159)).